Consider the following 188-residue polypeptide: uncharacterized protein (188 aa).

The helical transmembrane segment at 121–139 (IWLYGGASLITTFINLGLV) threads the bilayer.

This sequence to B.subtilis YwjB.

The protein localises to the membrane. This is an uncharacterized protein from Bacillus subtilis (strain 168).